Here is a 357-residue protein sequence, read N- to C-terminus: Holliday junction branch migration complex subunit RuvB (357 aa).

Positions 3 to 193 (WDDTTDAEAA…FGFTAHMEFY (191 aa)) are large ATPase domain (RuvB-L). ATP contacts are provided by residues leucine 32, arginine 33, glycine 74, lysine 77, threonine 78, threonine 79, 140–142 (EDF), arginine 183, tyrosine 193, and arginine 230. Threonine 78 contributes to the Mg(2+) binding site. The segment at 194–264 (GPAELERVIH…IAAAALAVYE (71 aa)) is small ATPAse domain (RuvB-S). A head domain (RuvB-H) region spans residues 267-357 (ARGLDRLDRG…GNGQPDLFGA (91 aa)). DNA-binding residues include arginine 303, arginine 322, and arginine 327. The segment at 337–357 (LGLTPPRPQSSGNGQPDLFGA) is disordered.

This sequence belongs to the RuvB family. As to quaternary structure, homohexamer. Forms an RuvA(8)-RuvB(12)-Holliday junction (HJ) complex. HJ DNA is sandwiched between 2 RuvA tetramers; dsDNA enters through RuvA and exits via RuvB. An RuvB hexamer assembles on each DNA strand where it exits the tetramer. Each RuvB hexamer is contacted by two RuvA subunits (via domain III) on 2 adjacent RuvB subunits; this complex drives branch migration. In the full resolvosome a probable DNA-RuvA(4)-RuvB(12)-RuvC(2) complex forms which resolves the HJ.

Its subcellular location is the cytoplasm. It carries out the reaction ATP + H2O = ADP + phosphate + H(+). Functionally, the RuvA-RuvB-RuvC complex processes Holliday junction (HJ) DNA during genetic recombination and DNA repair, while the RuvA-RuvB complex plays an important role in the rescue of blocked DNA replication forks via replication fork reversal (RFR). RuvA specifically binds to HJ cruciform DNA, conferring on it an open structure. The RuvB hexamer acts as an ATP-dependent pump, pulling dsDNA into and through the RuvAB complex. RuvB forms 2 homohexamers on either side of HJ DNA bound by 1 or 2 RuvA tetramers; 4 subunits per hexamer contact DNA at a time. Coordinated motions by a converter formed by DNA-disengaged RuvB subunits stimulates ATP hydrolysis and nucleotide exchange. Immobilization of the converter enables RuvB to convert the ATP-contained energy into a lever motion, pulling 2 nucleotides of DNA out of the RuvA tetramer per ATP hydrolyzed, thus driving DNA branch migration. The RuvB motors rotate together with the DNA substrate, which together with the progressing nucleotide cycle form the mechanistic basis for DNA recombination by continuous HJ branch migration. Branch migration allows RuvC to scan DNA until it finds its consensus sequence, where it cleaves and resolves cruciform DNA. The chain is Holliday junction branch migration complex subunit RuvB from Streptomyces coelicolor (strain ATCC BAA-471 / A3(2) / M145).